We begin with the raw amino-acid sequence, 593 residues long: Aspartate--tRNA(Asp/Asn) ligase (593 aa).

An L-aspartate-binding site is contributed by Glu173. The segment at 197 to 200 (QLFK) is aspartate. Residue Arg219 participates in L-aspartate binding. ATP contacts are provided by residues 219 to 221 (RDE) and Gln228. His451 provides a ligand contact to L-aspartate. Glu485 provides a ligand contact to ATP. Arg492 contacts L-aspartate. An ATP-binding site is contributed by 537 to 540 (GIDR).

The protein belongs to the class-II aminoacyl-tRNA synthetase family. Type 1 subfamily. As to quaternary structure, homodimer.

It is found in the cytoplasm. The enzyme catalyses tRNA(Asx) + L-aspartate + ATP = L-aspartyl-tRNA(Asx) + AMP + diphosphate. In terms of biological role, aspartyl-tRNA synthetase with relaxed tRNA specificity since it is able to aspartylate not only its cognate tRNA(Asp) but also tRNA(Asn). Reaction proceeds in two steps: L-aspartate is first activated by ATP to form Asp-AMP and then transferred to the acceptor end of tRNA(Asp/Asn). In Legionella pneumophila (strain Corby), this protein is Aspartate--tRNA(Asp/Asn) ligase.